The sequence spans 146 residues: Hemoglobin subunit beta (146 aa).

N-acetylvaline is present on Val-1. One can recognise a Globin domain in the interval 2–146; the sequence is HLTGEEKSLV…VANALAHKYH (145 aa). Thr-12 carries the post-translational modification Phosphothreonine. Position 44 is a phosphoserine (Ser-44). At Lys-59 the chain carries N6-acetyllysine. His-63 contacts heme b. Lys-82 is modified (N6-acetyllysine). His-92 is a heme b binding site. Cys-93 is subject to S-nitrosocysteine. An N6-acetyllysine modification is found at Lys-144.

Belongs to the globin family. As to quaternary structure, heterotetramer of two alpha chains and two beta chains. As to expression, red blood cells.

Functionally, involved in oxygen transport from the lung to the various peripheral tissues. The sequence is that of Hemoglobin subunit beta (HBB) from Ursus maritimus (Polar bear).